Consider the following 566-residue polypeptide: Phenylalanine--tRNA ligase beta subunit (566 aa).

One can recognise a B5 domain in the interval 287–362 (YFQEEVEFNV…IGEGLSSFNP (76 aa)). Mg(2+)-binding residues include Asp340, Asp346, Glu349, and Asp350.

It belongs to the phenylalanyl-tRNA synthetase beta subunit family. Type 2 subfamily. Tetramer of two alpha and two beta subunits. Requires Mg(2+) as cofactor.

It is found in the cytoplasm. The enzyme catalyses tRNA(Phe) + L-phenylalanine + ATP = L-phenylalanyl-tRNA(Phe) + AMP + diphosphate + H(+). This chain is Phenylalanine--tRNA ligase beta subunit, found in Borreliella burgdorferi (strain ATCC 35210 / DSM 4680 / CIP 102532 / B31) (Borrelia burgdorferi).